The chain runs to 518 residues: Crotonobetaine/carnitine--CoA ligase (518 aa).

Belongs to the ATP-dependent AMP-binding enzyme family.

The enzyme catalyses 4-(trimethylamino)butanoate + ATP + CoA = 4-(trimethylamino)butanoyl-CoA + AMP + diphosphate. The catalysed reaction is crotonobetaine + ATP + CoA = crotonobetainyl-CoA + AMP + diphosphate. It catalyses the reaction (R)-carnitine + ATP + CoA = (R)-carnitinyl-CoA + AMP + diphosphate. The protein operates within amine and polyamine metabolism; carnitine metabolism. In terms of biological role, catalyzes the transfer of CoA to carnitine, generating the initial carnitinyl-CoA needed for the CaiB reaction cycle. Also has activity toward crotonobetaine and gamma-butyrobetaine. The polypeptide is Crotonobetaine/carnitine--CoA ligase (Proteus mirabilis (strain HI4320)).